A 203-amino-acid polypeptide reads, in one-letter code: tRNA (guanine-N(7)-)-methyltransferase (203 aa).

Positions 34, 59, 86, and 107 each coordinate S-adenosyl-L-methionine. Asp-107 is a catalytic residue. Substrate-binding positions include Lys-111, Asp-143, and 181 to 184 (TSYE).

This sequence belongs to the class I-like SAM-binding methyltransferase superfamily. TrmB family.

It catalyses the reaction guanosine(46) in tRNA + S-adenosyl-L-methionine = N(7)-methylguanosine(46) in tRNA + S-adenosyl-L-homocysteine. It participates in tRNA modification; N(7)-methylguanine-tRNA biosynthesis. In terms of biological role, catalyzes the formation of N(7)-methylguanine at position 46 (m7G46) in tRNA. This is tRNA (guanine-N(7)-)-methyltransferase from Mycoplasmopsis pulmonis (strain UAB CTIP) (Mycoplasma pulmonis).